Reading from the N-terminus, the 431-residue chain is Beclin-2 (431 aa).

Residues leucine 17–serine 74 are disordered. Residues leucine 125–glutamate 248 adopt a coiled-coil conformation. Residues glutamate 173–arginine 243 form a required for homodimer formation region.

Belongs to the beclin family. As to quaternary structure, homodimer (via coiled-coil domain). Interacts (via coiled-coil domain) with ATG14 (via coiled-coil domain); this interaction is tighter than BECN2 self-association. Interacts with AMBRA1, UVRAG and PIK3C3/VPS34; these interactions are not disrupted by starvation. Does not interact with RUBCN. Interacts (via N-terminus) with GPRASP1/GASP1; the interaction is direct. As to expression, present in fetal and adult brain (at protein level).

The protein localises to the cytoplasm. Involved in 2 distinct lysosomal degradation pathways: acts as a regulator of autophagy and as a regulator of G-protein coupled receptors turnover. Regulates degradation in lysosomes of a variety of G-protein coupled receptors via its interaction with GPRASP1/GASP1. This is Beclin-2 from Homo sapiens (Human).